Here is a 342-residue protein sequence, read N- to C-terminus: L-threonine 3-dehydrogenase (342 aa).

C38 is a binding site for Zn(2+). Catalysis depends on charge relay system residues T40 and H43. Positions 63, 64, 93, 96, 99, and 107 each coordinate Zn(2+). Residues I175, D195, R200, 262-264, and 286-287 contribute to the NAD(+) site; these read LGI and IY.

This sequence belongs to the zinc-containing alcohol dehydrogenase family. As to quaternary structure, homotetramer. It depends on Zn(2+) as a cofactor.

It is found in the cytoplasm. The enzyme catalyses L-threonine + NAD(+) = (2S)-2-amino-3-oxobutanoate + NADH + H(+). Its pathway is amino-acid degradation; L-threonine degradation via oxydo-reductase pathway; glycine from L-threonine: step 1/2. Catalyzes the NAD(+)-dependent oxidation of L-threonine to 2-amino-3-ketobutyrate. The chain is L-threonine 3-dehydrogenase from Burkholderia cenocepacia (strain HI2424).